The primary structure comprises 398 residues: Succinyl-diaminopimelate desuccinylase (398 aa).

His-68 is a Zn(2+) binding site. Asp-70 is an active-site residue. Zn(2+) is bound at residue Asp-101. Glu-135 acts as the Proton acceptor in catalysis. Zn(2+) is bound by residues Glu-136, Glu-164, and His-349.

Belongs to the peptidase M20A family. DapE subfamily. In terms of assembly, homodimer. The cofactor is Zn(2+). Co(2+) is required as a cofactor.

It catalyses the reaction N-succinyl-(2S,6S)-2,6-diaminopimelate + H2O = (2S,6S)-2,6-diaminopimelate + succinate. Its pathway is amino-acid biosynthesis; L-lysine biosynthesis via DAP pathway; LL-2,6-diaminopimelate from (S)-tetrahydrodipicolinate (succinylase route): step 3/3. Its function is as follows. Catalyzes the hydrolysis of N-succinyl-L,L-diaminopimelic acid (SDAP), forming succinate and LL-2,6-diaminopimelate (DAP), an intermediate involved in the bacterial biosynthesis of lysine and meso-diaminopimelic acid, an essential component of bacterial cell walls. This is Succinyl-diaminopimelate desuccinylase from Wolbachia pipientis wMel.